Here is a 22-residue protein sequence, read N- to C-terminus: Defensin D1 (22 aa).

Belongs to the DEFL family. Group II subfamily.

In terms of biological role, antimicrobial peptide. Active against Gram-positive and Gram-negative bacterial pathogens. The sequence is that of Defensin D1 from Spinacia oleracea (Spinach).